Here is an 89-residue protein sequence, read N- to C-terminus: uncharacterized protein (89 aa).

The next 3 membrane-spanning stretches (helical) occupy residues 9–29 (ICNF…LHSI), 35–55 (ISLS…YIYL), and 65–85 (ILFA…FGTS).

The protein resides in the membrane. This is an uncharacterized protein from Schizosaccharomyces pombe (strain 972 / ATCC 24843) (Fission yeast).